The sequence spans 177 residues: Large ribosomal subunit protein uL6 (177 aa).

The protein belongs to the universal ribosomal protein uL6 family. In terms of assembly, part of the 50S ribosomal subunit.

This protein binds to the 23S rRNA, and is important in its secondary structure. It is located near the subunit interface in the base of the L7/L12 stalk, and near the tRNA binding site of the peptidyltransferase center. This is Large ribosomal subunit protein uL6 from Parvibaculum lavamentivorans (strain DS-1 / DSM 13023 / NCIMB 13966).